The following is a 127-amino-acid chain: Large ribosomal subunit protein bL12 (127 aa).

It belongs to the bacterial ribosomal protein bL12 family. Homodimer. Part of the ribosomal stalk of the 50S ribosomal subunit. Forms a multimeric L10(L12)X complex, where L10 forms an elongated spine to which 2 to 4 L12 dimers bind in a sequential fashion. Binds GTP-bound translation factors.

In terms of biological role, forms part of the ribosomal stalk which helps the ribosome interact with GTP-bound translation factors. Is thus essential for accurate translation. This chain is Large ribosomal subunit protein bL12, found in Thiobacillus denitrificans (strain ATCC 25259 / T1).